The following is a 220-amino-acid chain: UPF0441 protein Spro_4274 (220 aa).

The tract at residues 181–220 is disordered; it reads MAPKPAVTNTVTRGGFGESVAKQTSMQRSSATSSSRSMGG. Over residues 203–220 the composition is skewed to low complexity; that stretch reads QTSMQRSSATSSSRSMGG.

It belongs to the UPF0441 family.

This Serratia proteamaculans (strain 568) protein is UPF0441 protein Spro_4274.